A 181-amino-acid chain; its full sequence is uncharacterized protein (181 aa).

One can recognise a Macro domain in the interval methionine 1 to leucine 178.

This is an uncharacterized protein from Sulfolobus acidocaldarius (strain ATCC 33909 / DSM 639 / JCM 8929 / NBRC 15157 / NCIMB 11770).